The chain runs to 157 residues: Cytochrome c-type biogenesis protein CcmE (157 aa).

The Cytoplasmic segment spans residues 1-7 (MTPRQRR). A helical; Signal-anchor for type II membrane protein membrane pass occupies residues 8–28 (LGLLAAALACCGVAAALVLNA). The Periplasmic portion of the chain corresponds to 29 to 157 (FRANLVFFFS…GAMAAQELRR (129 aa)). 2 residues coordinate heme: H123 and Y127.

This sequence belongs to the CcmE/CycJ family.

It is found in the cell inner membrane. Functionally, heme chaperone required for the biogenesis of c-type cytochromes. Transiently binds heme delivered by CcmC and transfers the heme to apo-cytochromes in a process facilitated by CcmF and CcmH. The protein is Cytochrome c-type biogenesis protein CcmE of Cupriavidus taiwanensis (strain DSM 17343 / BCRC 17206 / CCUG 44338 / CIP 107171 / LMG 19424 / R1) (Ralstonia taiwanensis (strain LMG 19424)).